We begin with the raw amino-acid sequence, 505 residues long: Glutamate--tRNA ligase (505 aa).

The 'HIGH' region motif lies at 12–22 (PSPTGDPHVGT). The 'KMSKS' region signature appears at 253–257 (KLSKR). Position 256 (K256) interacts with ATP.

It belongs to the class-I aminoacyl-tRNA synthetase family. Glutamate--tRNA ligase type 1 subfamily. As to quaternary structure, monomer.

Its subcellular location is the cytoplasm. It carries out the reaction tRNA(Glu) + L-glutamate + ATP = L-glutamyl-tRNA(Glu) + AMP + diphosphate. Catalyzes the attachment of glutamate to tRNA(Glu) in a two-step reaction: glutamate is first activated by ATP to form Glu-AMP and then transferred to the acceptor end of tRNA(Glu). The polypeptide is Glutamate--tRNA ligase (Chlamydia pneumoniae (Chlamydophila pneumoniae)).